A 521-amino-acid chain; its full sequence is GMP synthase [glutamine-hydrolyzing] (521 aa).

The 196-residue stretch at 8-203 (KILILDFGAQ…VVDICGCQTL (196 aa)) folds into the Glutamine amidotransferase type-1 domain. Catalysis depends on Cys85, which acts as the Nucleophile. Active-site residues include His177 and Glu179. Residues 204 to 396 (WTAANIIDDQ…LGLPRTMVYR (193 aa)) form the GMPS ATP-PPase domain. 231–237 (SGGVDSS) lines the ATP pocket.

Homodimer.

The enzyme catalyses XMP + L-glutamine + ATP + H2O = GMP + L-glutamate + AMP + diphosphate + 2 H(+). It functions in the pathway purine metabolism; GMP biosynthesis; GMP from XMP (L-Gln route): step 1/1. In terms of biological role, catalyzes the synthesis of GMP from XMP. This is GMP synthase [glutamine-hydrolyzing] from Xanthomonas oryzae pv. oryzae (strain MAFF 311018).